Consider the following 270-residue polypeptide: Formamidopyrimidine-DNA glycosylase (270 aa).

The Schiff-base intermediate with DNA role is filled by P2. Catalysis depends on E3, which acts as the Proton donor. The active-site Proton donor; for beta-elimination activity is the K58. The DNA site is built by H91, R110, and K151. The FPG-type zinc finger occupies 236–270; it reads FAYGRGGQPCKVCGTTLREIKLGQRASVYCPKCQR. The active-site Proton donor; for delta-elimination activity is the R260.

It belongs to the FPG family. Monomer. The cofactor is Zn(2+).

The catalysed reaction is Hydrolysis of DNA containing ring-opened 7-methylguanine residues, releasing 2,6-diamino-4-hydroxy-5-(N-methyl)formamidopyrimidine.. It catalyses the reaction 2'-deoxyribonucleotide-(2'-deoxyribose 5'-phosphate)-2'-deoxyribonucleotide-DNA = a 3'-end 2'-deoxyribonucleotide-(2,3-dehydro-2,3-deoxyribose 5'-phosphate)-DNA + a 5'-end 5'-phospho-2'-deoxyribonucleoside-DNA + H(+). In terms of biological role, involved in base excision repair of DNA damaged by oxidation or by mutagenic agents. Acts as a DNA glycosylase that recognizes and removes damaged bases. Has a preference for oxidized purines, such as 7,8-dihydro-8-oxoguanine (8-oxoG). Has AP (apurinic/apyrimidinic) lyase activity and introduces nicks in the DNA strand. Cleaves the DNA backbone by beta-delta elimination to generate a single-strand break at the site of the removed base with both 3'- and 5'-phosphates. This Pseudomonas syringae pv. tomato (strain ATCC BAA-871 / DC3000) protein is Formamidopyrimidine-DNA glycosylase.